The sequence spans 91 residues: Small ribosomal subunit protein uS15 (91 aa).

It belongs to the universal ribosomal protein uS15 family. In terms of assembly, part of the 30S ribosomal subunit. Forms a bridge to the 50S subunit in the 70S ribosome, contacting the 23S rRNA.

Functionally, one of the primary rRNA binding proteins, it binds directly to 16S rRNA where it helps nucleate assembly of the platform of the 30S subunit by binding and bridging several RNA helices of the 16S rRNA. In terms of biological role, forms an intersubunit bridge (bridge B4) with the 23S rRNA of the 50S subunit in the ribosome. This chain is Small ribosomal subunit protein uS15, found in Rickettsia peacockii (strain Rustic).